Reading from the N-terminus, the 687-residue chain is MTAQSLLQTTLFLLSLLFLVQGAHGRGHREDFRFCSQRNQTHRSSLHYKPTPDLRISIENSEEALTVHAPFPAAHPASQSFPDPRGLYHFCLYWNRHAGRLHLLYGKRDFLLSDKASSLLCFQHQEESLAQGPPLLATSVTSWWSPQNISLPSAASFTFSFHSPPHTAAHNASVDMCELKRDLQLLSQFLKHPQKASRRPSAAPASQQLQSLESKLTSVRFMGDTVSFEEDRINATVWKLQPTAGLQDLHIHSRQEEEQSEILEYSVLLPRTLFQRTKGRRGEAEKRLLLVDFSSQALFQDKNSSQVLGEKVLGIVVQNTKVDNLTEPVVLTFQHQLQPKNVTLQCVFWVEDPTLSSPGHWSSAGCETVRRETQTSCLCNHLTYFAVLMVSSVEVDAVHKHYLSLLSYVGCVVSALACVVTIAAYLCSRRKPRDYTIKVHMNLLLAVFLLDTSFLLSEPVALTGSEAGCRASAIFLHFSLLACLSWMGLEGYNLYRLVVEVFGTYVPGYLLKLSAMGWGFPIFLVTLVALVDVDNYGPIILAVHRTPEGVIYPSMCWIRDSLVSYITNLGLFSLVFLFNMAMLATMVVQILRLRPHTQKWSHVLTLLGLSLVLGLPWALIFFSFASGTFQLVILYLFSIITSFQGFLIFIWYWSMRLQARGGPSPLKSNSDSARLPISSGSTSSSRI.

The first 25 residues, 1–25 (MTAQSLLQTTLFLLSLLFLVQGAHG), serve as a signal peptide directing secretion. A heparin-binding site is contributed by 26-33 (RGHREDFR). The Extracellular segment spans residues 26–402 (RGHREDFRFC…VEVDAVHKHY (377 aa)). Cystine bridges form between Cys-35–Cys-91 and Cys-121–Cys-177. N-linked (GlcNAc...) asparagine glycosylation is found at Asn-39, Asn-148, and Asn-171. 190 to 200 (LKHPQKASRRP) is a heparin binding site. Positions 224-395 (DTVSFEEDRI…AVLMVSSVEV (172 aa)) constitute a GAIN-B domain. Residues Asn-234, Asn-303, Asn-324, and Asn-341 are each glycosylated (N-linked (GlcNAc...) asparagine). 2 disulfides stabilise this stretch: Cys-346–Cys-377 and Cys-366–Cys-379. Positions 346 to 395 (CVFWVEDPTLSSPGHWSSAGCETVRRETQTSCLCNHLTYFAVLMVSSVEV) are GPS. The segment at 384–397 (YFAVLMVSSVEVDA) is stachel. A helical transmembrane segment spans residues 403–423 (LSLLSYVGCVVSALACVVTIA). The Cytoplasmic segment spans residues 424-442 (AYLCSRRKPRDYTIKVHMN). A helical membrane pass occupies residues 443 to 463 (LLLAVFLLDTSFLLSEPVALT). Topologically, residues 464–470 (GSEAGCR) are extracellular. A helical transmembrane segment spans residues 471–491 (ASAIFLHFSLLACLSWMGLEG). The Cytoplasmic segment spans residues 492–512 (YNLYRLVVEVFGTYVPGYLLK). A helical membrane pass occupies residues 513–533 (LSAMGWGFPIFLVTLVALVDV). The Extracellular segment spans residues 534–570 (DNYGPIILAVHRTPEGVIYPSMCWIRDSLVSYITNLG). The helical transmembrane segment at 571–591 (LFSLVFLFNMAMLATMVVQIL) threads the bilayer. Topologically, residues 592 to 603 (RLRPHTQKWSHV) are cytoplasmic. The chain crosses the membrane as a helical span at residues 604–624 (LTLLGLSLVLGLPWALIFFSF). Over 625-630 (ASGTFQ) the chain is Extracellular. Residues 631-651 (LVILYLFSIITSFQGFLIFIW) form a helical membrane-spanning segment. Residues 652–687 (YWSMRLQARGGPSPLKSNSDSARLPISSGSTSSSRI) are Cytoplasmic-facing. Residues 664 to 687 (SPLKSNSDSARLPISSGSTSSSRI) are disordered. A compositionally biased stretch (low complexity) spans 678–687 (SSGSTSSSRI).

This sequence belongs to the G-protein coupled receptor 2 family. LN-TM7 subfamily. As to quaternary structure, heterodimer of 2 chains generated by proteolytic processing; the large extracellular N-terminal fragment (ADGRG1 NT) and the membrane-bound C-terminal fragment (ADGRG1-CT) predominantly remain associated and non-covalently linked. ADGRG1 NT self-associates in a trans-trans manner; the homophilic interaction enhances receptor signaling. Interacts with TGM2. Interacts with heparin; leading to the reduction of ADGRG1 shedding. Interacts with COL3A1. Part of a GPCR-tetraspanin complex at least consisting of ADGRG1, CD81, eventually CD9, and GNA11 in which CD81 is enhancing the association of ADGRG1 with GNA11. In terms of processing, autoproteolytically cleaved into 2 fragments; the large extracellular N-terminal fragment (ADGRG1 NT) and the membrane-bound C-terminal fragment (ADGRG1 CT) predominantly remain associated and non-covalently linked. Shedding to yield the secreted ADGRG1 N-terminal fragment seems to involve metalloprotease(s). Ubiquitinated. Undergoes polyubiquitination upon activation.

The protein localises to the cell membrane. Its subcellular location is the secreted. The protein resides in the membrane raft. Its activity is regulated as follows. Forms a heterodimer of 2 chains generated by proteolytic processing that remain associated through non-covalent interactions mediated by the GAIN-B domain. In the inactivated receptor, the Stachel sequence (also named stalk) is embedded in the GAIN-B domain, where it adopts a beta-strand conformation. On activation, the Stachel moves into the 7 transmembrane region and adopts a twisted hook-shaped configuration that forms contacts within the receptor, leading to coupling of a G-alpha protein, which activates signaling. The cleaved GAIN-B and N-terminal domains can then dissociate from the rest of the receptor. In terms of biological role, adhesion G-protein coupled receptor (aGPCR) for steroid hormone 17alpha-hydroxypregnenolone (17-OH), which is involved in cell adhesion and cell-cell interactions. Ligand binding causes a conformation change that triggers signaling via guanine nucleotide-binding proteins (G proteins) and modulates the activity of downstream effectors, such as RhoA pathway. ADGRG1 is coupled to G(12) and/or G(13) G proteins (GNA12 and GNA13, respectively) and mediates the activation Rho small GTPases. Acts as a potent suppressor of ferroptosis: binding to 17-OH-binding initiates signaling that down-regulates CD36 and alleviates ferroptosis-induced liver injury. Ligand-binding also induces cell adhesion activity via association with proteins such as collagen III/COL3A1 and TGM2. Mediates cell matrix adhesion in developing neurons and hematopoietic stem cells. Involved in cortical development, specifically in maintenance of the pial basement membrane integrity and in cortical lamination: association with COL3A1 in the developing brain inhibits neuronal migration via activation of the RhoA pathway. Together with TGM2, acts as a regulator of myelination and myelin repair in oligodendrocyte precursor cells. Acts as a hemostatic sensor of shear force: G protein-coupled receptor signaling is activated in response to shear force in platelets, promoting G(13) G protein signaling, and platelet shape change and aggregation in a COL3A1-dependent manner. Acts as an inhibitor of VEGFA production thereby inhibiting angiogenesis through a signaling pathway mediated by PRKCA. Plays a role in the maintenance of hematopoietic stem cells in bone marrow niche. Plays an essential role in testis development. The sequence is that of Adhesion G-protein coupled receptor G1 (ADGRG1) from Pan troglodytes (Chimpanzee).